Reading from the N-terminus, the 95-residue chain is Co-chaperonin GroES (95 aa).

This sequence belongs to the GroES chaperonin family. Heptamer of 7 subunits arranged in a ring. Interacts with the chaperonin GroEL.

It localises to the cytoplasm. Together with the chaperonin GroEL, plays an essential role in assisting protein folding. The GroEL-GroES system forms a nano-cage that allows encapsulation of the non-native substrate proteins and provides a physical environment optimized to promote and accelerate protein folding. GroES binds to the apical surface of the GroEL ring, thereby capping the opening of the GroEL channel. The chain is Co-chaperonin GroES from Ruegeria pomeroyi (strain ATCC 700808 / DSM 15171 / DSS-3) (Silicibacter pomeroyi).